Consider the following 1530-residue polypeptide: Brefeldin A resistance protein (1530 aa).

Positions 1–26 (MNQNSDTTHGQALGSTLNHTTEVTRI) are enriched in polar residues. The tract at residues 1–100 (MNQNSDTTHG…SDDSSVDRLA (100 aa)) is disordered. An N-linked (GlcNAc...) asparagine glycan is attached at Asn-28. Residues 36-48 (SSSNVDESLDSSN) are compositionally biased toward low complexity. Residues 54-64 (KASHTNEEYRS) show a composition bias toward basic and acidic residues. N-linked (GlcNAc...) asparagine glycosylation is present at Asn-67. Low complexity predominate over residues 72–93 (PSSSNEPSPESSSNSDSSSSDD). Positions 153-410 (KTFPDIFLQP…FLDMGFDCHP (258 aa)) constitute an ABC transporter 1 domain. Residues Asn-273, Asn-334, and Asn-450 are each glycosylated (N-linked (GlcNAc...) asparagine). A phosphoserine mark is found at Ser-486 and Ser-489. At Thr-491 the chain carries Phosphothreonine. The next 6 helical transmembrane spans lie at 539–559 (AYIG…GSIF), 575–595 (VLFF…ANMF), 620–640 (LIVD…VLYF), 649–669 (GGFW…SAFF), 684–704 (ALGG…IPNI), and 791–811 (LAII…ASET). Residues 843–864 (PLDLETGQDTQGGDVVKESPDN) form a disordered region. An ABC transporter 2 domain is found at 882–1125 (FSWRNLNYDI…LLNYFESHGA (244 aa)). ATP is bound at residue 918 to 925 (GESGAGKT). N-linked (GlcNAc...) asparagine glycosylation is found at Asn-1159 and Asn-1175. Thr-1186 carries the phosphothreonine modification. 6 helical membrane-spanning segments follow: residues 1220 to 1240 (ILMS…FTFY), 1255 to 1275 (AVFM…PKFI), 1300 to 1320 (AIIV…LCWF), 1338 to 1358 (YAWL…QAVA), 1367 to 1387 (ASVV…VLQP), and 1392 to 1412 (VGFW…EGLL). Asn-1449 and Asn-1460 each carry an N-linked (GlcNAc...) asparagine glycan. Residues 1492–1512 (GIFVGYVFFNIFAVLLLFYVF) traverse the membrane as a helical segment.

Belongs to the ABC transporter superfamily. ABCG family. PDR (TC 3.A.1.205) subfamily.

The protein localises to the membrane. Its function is as follows. Confers hyper-resistance to brefeldin A (BFA), an inhibitor of intracellular protein transport. Could serve as an efflux pump of various antibiotics. The chain is Brefeldin A resistance protein (bfr1) from Schizosaccharomyces pombe (strain 972 / ATCC 24843) (Fission yeast).